We begin with the raw amino-acid sequence, 665 residues long: MTERLGSVFIEGVSPELDAGRHAVKRVVGERCTVKADVFKEGHDVLVAVIRWRQVTPRAQQTDWEEVPMRFLGNDRWEGEFPLTRNGRYEYTIEAWPDLFRTWTSELKRKVDAGRDVRSELLEGAALLEGAVARARTAKQPDDARVLGEAAVRLRQPPSPDLLAVALAPELADVASTHPDRSLARRYDKVLEVFADREKARFSAWYEFFPRSAKRDGVTHATFRDAEGWLPYIQQLGFDTVYLPPIHPIGRTARKGKNNSLAAAADDVGSPWAIGASEGGHKAVHPKLGTLEDFRHFVETAQAHGIEVALDLAFQCSPDHPYVKEHPEWFQHRPDGTIKTAENPPKRYEDIVNFDWMGPARESLWAELESVVLHWVKQGVNTFRVDNPHTKPTQFWAWLIRRVQEAHPQVLFLSEAFTRPKVMKALGKVGFTQSYTYFTWRNFKGELQEYLEEITQPPVSDYFRGNLWPNTPDILPEFLQNAGPGAFRLRAALAGTLSSVWGMYCGYELCEGRPIPGKEEYTDSEKYQLVAWDLDRPGNIRDWIARLNAARRTHPALHQYGTLRFFSSNNDRVLFYGKRTPDGGSLVLMAVSLDPYAAQEALLHVPLEWLGARPDETYQVHELMSDQRSLWQGPDVQVRLTPEQPAALWAVHRFRRTENAFDYYE.

Alpha-maltose 1-phosphate is bound by residues Lys255, Gln315, and Asp350. Asp386 (nucleophile) is an active-site residue. Alpha-maltose 1-phosphate is bound at residue Asn387. Glu415 serves as the catalytic Proton donor. Lys526–Tyr527 lines the alpha-maltose 1-phosphate pocket.

The protein belongs to the glycosyl hydrolase 13 family. GlgE subfamily. Homodimer.

The enzyme catalyses alpha-maltose 1-phosphate + [(1-&gt;4)-alpha-D-glucosyl](n) = [(1-&gt;4)-alpha-D-glucosyl](n+2) + phosphate. Its function is as follows. Maltosyltransferase that uses maltose 1-phosphate (M1P) as the sugar donor to elongate linear or branched alpha-(1-&gt;4)-glucans. Is involved in a branched alpha-glucan biosynthetic pathway from trehalose, together with TreS, Mak and GlgB. The protein is Alpha-1,4-glucan:maltose-1-phosphate maltosyltransferase of Myxococcus xanthus (strain DK1622).